Here is a 918-residue protein sequence, read N- to C-terminus: von Willebrand factor A domain-containing protein DDB_G0292016 (918 aa).

The region spanning 44 to 172 (KRCGLYSLKN…NVKVRVVISS (129 aa)) is the VIT domain. The VWFA domain maps to 299 to 467 (EFIFLIDCSG…NMEKQVMKLL (169 aa)). Residues 625–814 (VDIMNQSPPI…PSAPSQQKSV (190 aa)) form a disordered region. Residues 650–690 (ASGALSSSILSRKRSSSPSTATKRSSSSSFSSSYLSLSSSS) show a composition bias toward low complexity. The span at 716–746 (YESDGGDQSSEQDEEEEDDCDDFHEDLDEDL) shows a compositional bias: acidic residues. A compositionally biased stretch (basic and acidic residues) spans 752–774 (DVDKKECEKECKKKDSSKVDLKV). The span at 777 to 814 (SKVPLPSRSPSVSKPTTTSLLSPSPKSAPSAPSQQKSV) shows a compositional bias: low complexity.

The polypeptide is von Willebrand factor A domain-containing protein DDB_G0292016 (Dictyostelium discoideum (Social amoeba)).